The chain runs to 305 residues: U6 small nuclear RNA (adenine-(43)-N(6))-methyltransferase (305 aa).

S-adenosyl-L-methionine is bound by residues Arg87, Gly112, Glu135, Thr166, and Asn188. Positions 197 to 221 (PNPLGGNTRNPERRPAPNNARTGSQ) are disordered.

Belongs to the methyltransferase superfamily. METTL16/RlmF family.

It carries out the reaction adenosine in U6 snRNA + S-adenosyl-L-methionine = N(6)-methyladenosine in U6 snRNA + S-adenosyl-L-homocysteine + H(+). Its function is as follows. RNA N6-methyltransferase that mediates N6-methylation of adenine of U6 small nuclear RNA (U6 snRNA). This is U6 small nuclear RNA (adenine-(43)-N(6))-methyltransferase from Drosophila melanogaster (Fruit fly).